The sequence spans 111 residues: Ribonuclease P protein component 1 (111 aa).

It belongs to the eukaryotic/archaeal RNase P protein component 1 family. In terms of assembly, consists of a catalytic RNA component and at least 4-5 protein subunits.

It localises to the cytoplasm. The catalysed reaction is Endonucleolytic cleavage of RNA, removing 5'-extranucleotides from tRNA precursor.. Functionally, part of ribonuclease P, a protein complex that generates mature tRNA molecules by cleaving their 5'-ends. The sequence is that of Ribonuclease P protein component 1 from Hyperthermus butylicus (strain DSM 5456 / JCM 9403 / PLM1-5).